We begin with the raw amino-acid sequence, 632 residues long: Cell pattern formation-associated protein stuA (632 aa).

The span at Met-1–Pro-20 shows a compositional bias: polar residues. Residues Met-1 to Thr-27 form a disordered region. The HTH APSES-type domain maps to Arg-128–Pro-234. A DNA-binding region (H-T-H motif) is located at residues Gly-162–Glu-183. Disordered stretches follow at residues Asp-246–Leu-315, Gln-340–Tyr-386, Ala-403–Pro-460, and Asn-473–Arg-632. Composition is skewed to polar residues over residues Gly-254–Pro-264, Met-275–Gly-295, Gln-340–Met-354, and Gly-364–Gln-376. A compositionally biased stretch (low complexity) spans Pro-377–Tyr-386. A compositionally biased stretch (basic and acidic residues) spans Glu-428–Arg-438. A compositionally biased stretch (polar residues) spans Asn-473–Asp-506. Positions Ala-558–Ser-576 are enriched in low complexity. The nuclear localization domain stretch occupies residues Lys-578 to Lys-604. Positions Arg-579–Thr-600 are enriched in basic and acidic residues.

This sequence belongs to the EFG1/PHD1/stuA family.

The protein localises to the nucleus. In terms of biological role, transcription factor that regulates asexual reproduction. Binds the StuA-response elements (StRE) with the consensus sequence 5'-(A/T)CGCG(T/A)N(A/C)-3' at the promoters of target genes. Required for accurate spatial organization of the developing conidiophore. Primarily involved in the formation of the uninucleate sterigmata, which arise by budding in this multicellular structure. Required for metula and phialide formation during conidiation but is not required for dimorphic growth. The sequence is that of Cell pattern formation-associated protein stuA from Talaromyces marneffei (Penicillium marneffei).